Consider the following 328-residue polypeptide: GMP reductase (328 aa).

Cysteine 176 (thioimidate intermediate) is an active-site residue. An NADP(+)-binding site is contributed by 205 to 228 (IIADGGIRTHGDIAKSIRFGASMI).

This sequence belongs to the IMPDH/GMPR family. GuaC type 2 subfamily.

The catalysed reaction is IMP + NH4(+) + NADP(+) = GMP + NADPH + 2 H(+). In terms of biological role, catalyzes the irreversible NADPH-dependent deamination of GMP to IMP. It functions in the conversion of nucleobase, nucleoside and nucleotide derivatives of G to A nucleotides, and in maintaining the intracellular balance of A and G nucleotides. In Streptococcus pneumoniae serotype 4 (strain ATCC BAA-334 / TIGR4), this protein is GMP reductase.